The sequence spans 55 residues: Protein CADMIUM TOLERANCE 1 (55 aa).

Residues 24–40 (GCLYACIFTALCCFCCY) form a helical membrane-spanning segment.

This sequence belongs to the CYSTM1 family.

It is found in the cell membrane. Its subcellular location is the secreted. The protein localises to the cell wall. Confers resistance to heavy metal ions (e.g. cadmium (CdCl(2)) and copper (CuCl(2))) by chelating them at the plasma membrane of root cells, thus stopping their entry and reducing their accumulation. Binds to aluminium (Al). The sequence is that of Protein CADMIUM TOLERANCE 1 from Oryza sativa subsp. indica (Rice).